Reading from the N-terminus, the 240-residue chain is NDR1/HIN1-like protein 2 (240 aa).

Residues 57–77 traverse the membrane as a helical segment; the sequence is NILIAVAVILGVAALILWLIF. 4 N-linked (GlcNAc...) asparagine glycosylation sites follow: N109, N141, N151, and N223.

Expressed at low levels in roots, rosette leaves, cauline leaves, stems, flowers and siliques.

It localises to the cell membrane. Functionally, may play a role in plant immunity. This Arabidopsis thaliana (Mouse-ear cress) protein is NDR1/HIN1-like protein 2.